The following is a 311-amino-acid chain: MTKIIFMGTPDFSTTVLEMLIAEHDVIAVVTQPDRPVGRKRVMTPPPVKKVAMKYDLPVYQPEKLSGSEELEQLLQLDVDLIVTAAFGQLLPESLLALPKLGAINVHASLLPKYRGGAPIHQAIIDGEQETGITIMYMVKKLDAGNIISQQAIKIEENDNVGTMHDKLSVLGADLLKETLPSIIEGTNESVPQDDTQATFASNIRREDERISWNKPGRQVFNQIRGLSPWPVAYTTMDDTNLKIYDAELVETNKINEPGTIIETTKKAIIVATNDNEAVAIKDMQLAGKKRMLAANYLSGAQNTLVGKKLI.

109-112 (SLLP) contacts (6S)-5,6,7,8-tetrahydrofolate.

This sequence belongs to the Fmt family.

It carries out the reaction L-methionyl-tRNA(fMet) + (6R)-10-formyltetrahydrofolate = N-formyl-L-methionyl-tRNA(fMet) + (6S)-5,6,7,8-tetrahydrofolate + H(+). Its function is as follows. Attaches a formyl group to the free amino group of methionyl-tRNA(fMet). The formyl group appears to play a dual role in the initiator identity of N-formylmethionyl-tRNA by promoting its recognition by IF2 and preventing the misappropriation of this tRNA by the elongation apparatus. The sequence is that of Methionyl-tRNA formyltransferase from Staphylococcus aureus (strain JH1).